The following is a 272-amino-acid chain: Small ribosomal subunit protein uS2 (272 aa).

Positions 224 to 233 are enriched in basic and acidic residues; the sequence is EGKKAREERQ. Residues 224 to 272 form a disordered region; the sequence is EGKKAREERQLAAAKDAAGDAKPEAEEAPAAAEAEEAPAAEAEEAPAAE. A compositionally biased stretch (acidic residues) spans 256-272; that stretch reads EAEEAPAAEAEEAPAAE.

The protein belongs to the universal ribosomal protein uS2 family.

This is Small ribosomal subunit protein uS2 from Corynebacterium glutamicum (strain ATCC 13032 / DSM 20300 / JCM 1318 / BCRC 11384 / CCUG 27702 / LMG 3730 / NBRC 12168 / NCIMB 10025 / NRRL B-2784 / 534).